We begin with the raw amino-acid sequence, 427 residues long: Polyprenol-phosphate-mannose-dependent alpha-(1-2)-phosphatidylinositol mannoside mannosyltransferase (427 aa).

10 helical membrane passes run Leu-18–Phe-38, Ala-101–Leu-121, Trp-143–Phe-163, Leu-191–Leu-211, Ala-218–Trp-238, Glu-279–Met-299, Pro-308–Ser-328, Trp-331–Trp-346, Val-351–Leu-371, and Leu-386–Val-406.

This sequence belongs to the glycosyltransferase 87 family.

It is found in the cell membrane. It functions in the pathway phospholipid metabolism; phosphatidylinositol metabolism. Functionally, responsible for the addition of alpha-(1-2) mannose branches to the linear mannan core on the biosynthetic pathway to mature lipoarabinomannan (LAM). In Mycobacterium tuberculosis (strain ATCC 25618 / H37Rv), this protein is Polyprenol-phosphate-mannose-dependent alpha-(1-2)-phosphatidylinositol mannoside mannosyltransferase.